Reading from the N-terminus, the 159-residue chain is Transcription elongation factor GreA (159 aa).

Residues 3-37 (TNKEVVLTYEGLQKLEQELENLKTVKRREVAERIK) adopt a coiled-coil conformation.

The protein belongs to the GreA/GreB family.

Its function is as follows. Necessary for efficient RNA polymerase transcription elongation past template-encoded arresting sites. The arresting sites in DNA have the property of trapping a certain fraction of elongating RNA polymerases that pass through, resulting in locked ternary complexes. Cleavage of the nascent transcript by cleavage factors such as GreA or GreB allows the resumption of elongation from the new 3'terminus. GreA releases sequences of 2 to 3 nucleotides. This is Transcription elongation factor GreA from Acetivibrio thermocellus (strain ATCC 27405 / DSM 1237 / JCM 9322 / NBRC 103400 / NCIMB 10682 / NRRL B-4536 / VPI 7372) (Clostridium thermocellum).